The following is a 111-amino-acid chain: MAKGGFPGGFNINNMIKQAQQMQEEIKKMQEELMQKTVEATVGGGMVKAVANGRKELVSIEINPAVVDKDDVETLEDLVLAAVNQALRNAEEMIASEMAKITGGLNIPGLF.

The protein belongs to the YbaB/EbfC family. As to quaternary structure, homodimer.

It is found in the cytoplasm. The protein localises to the nucleoid. Its function is as follows. Binds to DNA and alters its conformation. May be involved in regulation of gene expression, nucleoid organization and DNA protection. The chain is Nucleoid-associated protein Teth514_0034 from Thermoanaerobacter sp. (strain X514).